The sequence spans 72 residues: Metallothionein-like protein 1 (72 aa).

Belongs to the metallothionein superfamily. Type 15 family.

Metallothioneins have a high content of cysteine residues that bind various heavy metals. The chain is Metallothionein-like protein 1 from Erythranthe guttata (Yellow monkey flower).